Here is a 943-residue protein sequence, read N- to C-terminus: Nuclear receptor coactivator 7 (943 aa).

Methionine 1 is modified (N-acetylmethionine). The segment covering 1 to 15 has biased composition (basic and acidic residues); the sequence is MDTKEEKKEQKERKQ. Residues 1 to 32 adopt a coiled-coil conformation; that stretch reads MDTKEEKKEQKERKQSYFARLKKKKQAKQNAE. Positions 1–83 are disordered; sequence MDTKEEKKEQ…RKSNQLKEIR (83 aa). A Phosphoserine modification is found at serine 92. One can recognise a LysM domain in the interval 117 to 160; it reads MEYTAGSQDTLNSVALKFNVTPNKLVELNKLFTHTIVPGQVLFV. Threonine 137 carries the post-translational modification Phosphothreonine. Residues 169–189 form a disordered region; the sequence is TIQLSSSTPGATVSPSSSDAE. Residues 177–187 are compositionally biased toward polar residues; the sequence is PGATVSPSSSD. Residues serine 182, serine 186, serine 211, serine 212, and serine 214 each carry the phosphoserine modification. The disordered stretch occupies residues 334–369; that stretch reads EKRQQNGERTLALDAKSVRSPEESTERTCTRIEPPD. Basic and acidic residues predominate over residues 349-369; sequence KSVRSPEESTERTCTRIEPPD. Phosphoserine is present on residues serine 442, serine 498, and serine 500. The span at 486–499 shows a compositional bias: basic and acidic residues; that stretch reads EKQDEAPEVDKHSG. Disordered regions lie at residues 486-507 and 543-576; these read EKQDEAPEVDKHSGSPENLGES and LSDRKSIEPGGIDITLSSSLPQAGDSPPEDNKEP. The region spanning 782 to 943 is the TLDc domain; sequence ALLENMHIEQ…VQDLEVWTFE (162 aa).

This sequence belongs to the OXR1 family. Interacts with ESR1, ESR2A, ESR2B, THRB, PPARG and RARA in a ligand-inducible manner. Interacts with the heterodimer AHR-ARNT. As to expression, highly expressed in brain and kidney. Weakly expressed in mammary gland, lung and testis. In brain, expression is found in neurons of cerebral cortex, thalamus, hypothalamus, hippocampus, cerebellum, striatum and choroid plexus.

Its subcellular location is the nucleus. In terms of biological role, enhances the transcriptional activities of several nuclear receptors. Involved in the coactivation of different nuclear receptors, such as ESR1, THRB, PPARG and RARA. This chain is Nuclear receptor coactivator 7 (Ncoa7), found in Mus musculus (Mouse).